A 584-amino-acid chain; its full sequence is 2-succinyl-5-enolpyruvyl-6-hydroxy-3-cyclohexene-1-carboxylate synthase (584 aa).

Belongs to the TPP enzyme family. MenD subfamily. As to quaternary structure, homodimer. Mg(2+) is required as a cofactor. Requires Mn(2+) as cofactor. The cofactor is thiamine diphosphate.

It catalyses the reaction isochorismate + 2-oxoglutarate + H(+) = 5-enolpyruvoyl-6-hydroxy-2-succinyl-cyclohex-3-ene-1-carboxylate + CO2. It participates in quinol/quinone metabolism; 1,4-dihydroxy-2-naphthoate biosynthesis; 1,4-dihydroxy-2-naphthoate from chorismate: step 2/7. It functions in the pathway quinol/quinone metabolism; menaquinone biosynthesis. Catalyzes the thiamine diphosphate-dependent decarboxylation of 2-oxoglutarate and the subsequent addition of the resulting succinic semialdehyde-thiamine pyrophosphate anion to isochorismate to yield 2-succinyl-5-enolpyruvyl-6-hydroxy-3-cyclohexene-1-carboxylate (SEPHCHC). In Bacillus cytotoxicus (strain DSM 22905 / CIP 110041 / 391-98 / NVH 391-98), this protein is 2-succinyl-5-enolpyruvyl-6-hydroxy-3-cyclohexene-1-carboxylate synthase.